We begin with the raw amino-acid sequence, 293 residues long: Epimerase family protein SDR39U1 (293 aa).

Residues 31–32, 58–59, E77, R82, and V160 each bind NADP(+); these read SR and LA.

Belongs to the NAD(P)-dependent epimerase/dehydratase family. SDR39U1 subfamily.

Its function is as follows. Putative NADP-dependent oxidoreductase. The protein is Epimerase family protein SDR39U1 (Sdr39u1) of Mus musculus (Mouse).